The primary structure comprises 466 residues: tRNA modification GTPase MnmE (466 aa).

Residues arginine 23, glutamate 86, and lysine 125 each contribute to the (6S)-5-formyl-5,6,7,8-tetrahydrofolate site. Residues 221–388 (GIPVAIVGEP…LKNELLSFVN (168 aa)) form the TrmE-type G domain. K(+) is bound at residue asparagine 231. Residues 231 to 236 (NVGKST), 250 to 256 (SDIAGTT), and 275 to 278 (DTAG) each bind GTP. Serine 235 serves as a coordination point for Mg(2+). K(+)-binding residues include serine 250, isoleucine 252, and threonine 255. Threonine 256 contacts Mg(2+). Lysine 466 contacts (6S)-5-formyl-5,6,7,8-tetrahydrofolate.

Belongs to the TRAFAC class TrmE-Era-EngA-EngB-Septin-like GTPase superfamily. TrmE GTPase family. Homodimer. Heterotetramer of two MnmE and two MnmG subunits. It depends on K(+) as a cofactor.

The protein localises to the cytoplasm. In terms of biological role, exhibits a very high intrinsic GTPase hydrolysis rate. Involved in the addition of a carboxymethylaminomethyl (cmnm) group at the wobble position (U34) of certain tRNAs, forming tRNA-cmnm(5)s(2)U34. The sequence is that of tRNA modification GTPase MnmE from Flavobacterium johnsoniae (strain ATCC 17061 / DSM 2064 / JCM 8514 / BCRC 14874 / CCUG 350202 / NBRC 14942 / NCIMB 11054 / UW101) (Cytophaga johnsonae).